The following is a 548-amino-acid chain: Chaperonin GroEL (548 aa).

Residues 29 to 32, Lys50, 86 to 90, Gly414, 478 to 480, and Asp494 each bind ATP; these read TLGP, DGTTT, and NAA.

This sequence belongs to the chaperonin (HSP60) family. Forms a cylinder of 14 subunits composed of two heptameric rings stacked back-to-back. Interacts with the co-chaperonin GroES.

It is found in the cytoplasm. The enzyme catalyses ATP + H2O + a folded polypeptide = ADP + phosphate + an unfolded polypeptide.. Its function is as follows. Together with its co-chaperonin GroES, plays an essential role in assisting protein folding. The GroEL-GroES system forms a nano-cage that allows encapsulation of the non-native substrate proteins and provides a physical environment optimized to promote and accelerate protein folding. The chain is Chaperonin GroEL from Alcanivorax borkumensis (strain ATCC 700651 / DSM 11573 / NCIMB 13689 / SK2).